We begin with the raw amino-acid sequence, 375 residues long: MLFNVSACDIRDKPMPSNNDINKIDQLERVKKVRKNSSQSEAGSSSSGNSSFVALVKASNLKEDALYLPQDCTSSNGLNKKCRKIFLTDGGDRSWEMDLKFDKNLDSFCITRGWRHFCDENGKKLPNQERFVTVRLVPDCLRNKRLYLSRRFLKNNGLGEPKMVTLVGTDGTRILANLLRESTGRMSLGRGWVDFAKANRLKIGEYFTLESIWENDSPILSLYGTNTSKSDKRKRRENFPVACEKEYVSTEARNRNEPEKDKNTEEMINQASLSENRLVITLVPEDVKAGMLRLPSHFMKANGIDKVGKIYMLGINEMEWWWGDLLTRDGIVSVGCGWRYFCESNGVKIGKSFTLECMYKYDTRPVFKFCPKSGK.

DNA-binding regions (TF-B3) lie at residues 51 to 147 (SFVA…KRLY), 131 to 226 (FVTV…YGTN), and 277 to 375 (RLVI…KSGK).

The protein localises to the nucleus. The chain is B3 domain-containing protein REM-like 2 from Arabidopsis thaliana (Mouse-ear cress).